The primary structure comprises 148 residues: UPF0179 protein Mpal_0949 (148 aa).

The protein belongs to the UPF0179 family.

The polypeptide is UPF0179 protein Mpal_0949 (Methanosphaerula palustris (strain ATCC BAA-1556 / DSM 19958 / E1-9c)).